The following is a 444-amino-acid chain: Methylenetetrahydrofolate--tRNA-(uracil-5-)-methyltransferase TrmFO (444 aa).

An FAD-binding site is contributed by 11–16 (GGGLAG).

The protein belongs to the MnmG family. TrmFO subfamily. FAD serves as cofactor.

It is found in the cytoplasm. The enzyme catalyses uridine(54) in tRNA + (6R)-5,10-methylene-5,6,7,8-tetrahydrofolate + NADH + H(+) = 5-methyluridine(54) in tRNA + (6S)-5,6,7,8-tetrahydrofolate + NAD(+). The catalysed reaction is uridine(54) in tRNA + (6R)-5,10-methylene-5,6,7,8-tetrahydrofolate + NADPH + H(+) = 5-methyluridine(54) in tRNA + (6S)-5,6,7,8-tetrahydrofolate + NADP(+). Catalyzes the folate-dependent formation of 5-methyl-uridine at position 54 (M-5-U54) in all tRNAs. The polypeptide is Methylenetetrahydrofolate--tRNA-(uracil-5-)-methyltransferase TrmFO (Desulfotalea psychrophila (strain LSv54 / DSM 12343)).